Here is a 478-residue protein sequence, read N- to C-terminus: Trigger factor (478 aa).

The segment at 1–41 is disordered; it reads MAELADAPDLGSGARKGVRVRLPPPAPHKNGGKNESRGSGQ. One can recognise a PPIase FKBP-type domain in the interval 197–279; it reads GDMLVVEYEV…IKEIKKKVLP (83 aa). Residues 455–472 are compositionally biased toward basic and acidic residues; that stretch reads VEQKQEEEKKEEKEEVKN. The segment at 455–478 is disordered; the sequence is VEQKQEEEKKEEKEEVKNESQGNT.

Belongs to the FKBP-type PPIase family. Tig subfamily.

It localises to the cytoplasm. The catalysed reaction is [protein]-peptidylproline (omega=180) = [protein]-peptidylproline (omega=0). Its function is as follows. Involved in protein export. Acts as a chaperone by maintaining the newly synthesized protein in an open conformation. Functions as a peptidyl-prolyl cis-trans isomerase. The protein is Trigger factor of Aquifex aeolicus (strain VF5).